A 377-amino-acid chain; its full sequence is Palmitoyltransferase ZDHHC16 (377 aa).

The Cytoplasmic segment spans residues 1-79 (MRGQWSLLLG…WLVDNVIRWC (79 aa)). Residues 80–100 (GVVFVVLVIVLTSSIVAIAYL) form a helical membrane-spanning segment. At 101–116 (CVLPLILQTYSVPRLC) the chain is on the lumenal side. Residues 117-137 (WHFFYSHWNLILIVFHYYQAI) form a helical membrane-spanning segment. Residues 138-198 (TTPPGYPPQG…NNCVGHYNHR (61 aa)) lie on the Cytoplasmic side of the membrane. The region spanning 155 to 205 (SICKKCINPKPARTHHCSICNRCVLKMDHHCPWLNNCVGHYNHRYFFSFCF) is the DHHC domain. The active-site S-palmitoyl cysteine intermediate is the C185. A helical transmembrane segment spans residues 199-219 (YFFSFCFFMTLGCVYCSYGSW). At 220–266 (DLFREAYAAIEKMKQLDKNKLQAVANQTYHQTPPPTFSFRERVTHKS) the chain is on the lumenal side. Residues 267 to 287 (LVYLWFLCSSVALALGALTIW) traverse the membrane as a helical segment. The Cytoplasmic portion of the chain corresponds to 288-377 (HAVLISRGET…TAHSASVMAV (90 aa)).

This sequence belongs to the DHHC palmitoyltransferase family. As to quaternary structure, interacts with ABL1. Interacts with COPS5/JAB1.

The protein resides in the endoplasmic reticulum membrane. It carries out the reaction L-cysteinyl-[protein] + hexadecanoyl-CoA = S-hexadecanoyl-L-cysteinyl-[protein] + CoA. Palmitoyl acyltransferase that mediates palmitoylation of proteins such as PLN and ZDHHC6. Required during embryonic heart development and cardiac function, possibly by mediating palmitoylation of PLN, thereby affecting PLN phosphorylation and homooligomerization. Also required for eye development. Palmitoylates ZDHHC6, affecting the quaternary assembly of ZDHHC6, its localization, stability and function. May play a role in DNA damage response. May be involved in apoptosis regulation. Involved in the proliferation of neural stem cells by regulating the FGF/ERK pathway. The chain is Palmitoyltransferase ZDHHC16 from Bos taurus (Bovine).